The following is a 269-amino-acid chain: Adenosylcobinamide-GDP ribazoletransferase (269 aa).

Helical transmembrane passes span 63 to 83, 87 to 107, 137 to 157, 158 to 178, 202 to 222, and 246 to 266; these read SAYYPLAGYAVGGLVAGLLYL, LPPGVVAALGVGLWLGLTGML, VGAFGLATGVLALLLLWSLLG, AGLPWYAPLVAAVVARMVVLM, LAFLFALPALLLPHAWLAALV, and VYGLLIVVAELLVLGFYGWGF.

Belongs to the CobS family. Mg(2+) serves as cofactor.

It localises to the cell membrane. The catalysed reaction is alpha-ribazole + adenosylcob(III)inamide-GDP = adenosylcob(III)alamin + GMP + H(+). It catalyses the reaction alpha-ribazole 5'-phosphate + adenosylcob(III)inamide-GDP = adenosylcob(III)alamin 5'-phosphate + GMP + H(+). Its pathway is cofactor biosynthesis; adenosylcobalamin biosynthesis; adenosylcobalamin from cob(II)yrinate a,c-diamide: step 7/7. Joins adenosylcobinamide-GDP and alpha-ribazole to generate adenosylcobalamin (Ado-cobalamin). Also synthesizes adenosylcobalamin 5'-phosphate from adenosylcobinamide-GDP and alpha-ribazole 5'-phosphate. The chain is Adenosylcobinamide-GDP ribazoletransferase from Deinococcus radiodurans (strain ATCC 13939 / DSM 20539 / JCM 16871 / CCUG 27074 / LMG 4051 / NBRC 15346 / NCIMB 9279 / VKM B-1422 / R1).